The primary structure comprises 340 residues: Ketol-acid reductoisomerase (NADP(+)) (340 aa).

A KARI N-terminal Rossmann domain is found at 2–182 (ANIYYENHAD…GCTRAGVIET (181 aa)). NADP(+) contacts are provided by residues 25–28 (FGSQ), Ser51, Ser53, and 83–86 (DTAQ). The active site involves His108. Residue Gly134 coordinates NADP(+). Residues 183 to 328 (TFAEETETDL…RELRRMMPFV (146 aa)) form the KARI C-terminal knotted domain. Asp191, Glu195, Glu227, and Glu231 together coordinate Mg(2+). Substrate is bound at residue Ser252.

The protein belongs to the ketol-acid reductoisomerase family. Mg(2+) serves as cofactor.

The catalysed reaction is (2R)-2,3-dihydroxy-3-methylbutanoate + NADP(+) = (2S)-2-acetolactate + NADPH + H(+). It catalyses the reaction (2R,3R)-2,3-dihydroxy-3-methylpentanoate + NADP(+) = (S)-2-ethyl-2-hydroxy-3-oxobutanoate + NADPH + H(+). It functions in the pathway amino-acid biosynthesis; L-isoleucine biosynthesis; L-isoleucine from 2-oxobutanoate: step 2/4. The protein operates within amino-acid biosynthesis; L-valine biosynthesis; L-valine from pyruvate: step 2/4. In terms of biological role, involved in the biosynthesis of branched-chain amino acids (BCAA). Catalyzes an alkyl-migration followed by a ketol-acid reduction of (S)-2-acetolactate (S2AL) to yield (R)-2,3-dihydroxy-isovalerate. In the isomerase reaction, S2AL is rearranged via a Mg-dependent methyl migration to produce 3-hydroxy-3-methyl-2-ketobutyrate (HMKB). In the reductase reaction, this 2-ketoacid undergoes a metal-dependent reduction by NADPH to yield (R)-2,3-dihydroxy-isovalerate. In Roseiflexus castenholzii (strain DSM 13941 / HLO8), this protein is Ketol-acid reductoisomerase (NADP(+)).